The chain runs to 347 residues: NADH-ubiquinone oxidoreductase chain 2 (347 aa).

The next 11 membrane-spanning stretches (helical) occupy residues 3–23 (PLIF…VMMS), 25–45 (HWLM…PLLM), 59–79 (YFLT…INLL), 96–116 (IIMT…FWVP), 122–144 (ISLS…VLYV), 149–171 (INLD…GGLN), 178–198 (ILAY…VFNP), 202–222 (LLNL…FMVA), 247–267 (IMLS…WMII), 276–296 (ITLA…YMRL), and 326–346 (LPVL…ITLL).

This sequence belongs to the complex I subunit 2 family. As to quaternary structure, core subunit of respiratory chain NADH dehydrogenase (Complex I) which is composed of 45 different subunits. Interacts with TMEM242.

The protein localises to the mitochondrion inner membrane. It catalyses the reaction a ubiquinone + NADH + 5 H(+)(in) = a ubiquinol + NAD(+) + 4 H(+)(out). Its function is as follows. Core subunit of the mitochondrial membrane respiratory chain NADH dehydrogenase (Complex I) which catalyzes electron transfer from NADH through the respiratory chain, using ubiquinone as an electron acceptor. Essential for the catalytic activity and assembly of complex I. The sequence is that of NADH-ubiquinone oxidoreductase chain 2 from Saccopteryx bilineata (Greater white-lined bat).